The following is a 148-amino-acid chain: Low molecular weight protein-tyrosine-phosphatase Etp (148 aa).

The Nucleophile role is filled by Cys-13. Residue Arg-19 is part of the active site. Asp-119 functions as the Proton donor in the catalytic mechanism.

This sequence belongs to the low molecular weight phosphotyrosine protein phosphatase family.

It catalyses the reaction O-phospho-L-tyrosyl-[protein] + H2O = L-tyrosyl-[protein] + phosphate. Dephosphorylates etk. In Escherichia coli O157:H7, this protein is Low molecular weight protein-tyrosine-phosphatase Etp (etp).